A 186-amino-acid polypeptide reads, in one-letter code: Potassium-transporting ATPase KdpC subunit 1 (186 aa).

The helical transmembrane segment at 10–30 (LTIITMVLCGFLFPLAITLIG) threads the bilayer.

This sequence belongs to the KdpC family. In terms of assembly, the system is composed of three essential subunits: KdpA, KdpB and KdpC.

Its subcellular location is the cell membrane. In terms of biological role, part of the high-affinity ATP-driven potassium transport (or Kdp) system, which catalyzes the hydrolysis of ATP coupled with the electrogenic transport of potassium into the cytoplasm. This subunit acts as a catalytic chaperone that increases the ATP-binding affinity of the ATP-hydrolyzing subunit KdpB by the formation of a transient KdpB/KdpC/ATP ternary complex. The protein is Potassium-transporting ATPase KdpC subunit 1 of Staphylococcus aureus (strain Mu50 / ATCC 700699).